A 177-amino-acid chain; its full sequence is ATP-dependent protease subunit HslV (177 aa).

Thr2 is a catalytic residue. Na(+) contacts are provided by Gly158, Cys161, and Thr164.

The protein belongs to the peptidase T1B family. HslV subfamily. In terms of assembly, a double ring-shaped homohexamer of HslV is capped on each side by a ring-shaped HslU homohexamer. The assembly of the HslU/HslV complex is dependent on binding of ATP.

The protein resides in the cytoplasm. It catalyses the reaction ATP-dependent cleavage of peptide bonds with broad specificity.. Its activity is regulated as follows. Allosterically activated by HslU binding. Its function is as follows. Protease subunit of a proteasome-like degradation complex believed to be a general protein degrading machinery. The chain is ATP-dependent protease subunit HslV from Pseudomonas aeruginosa (strain LESB58).